Here is a 324-residue protein sequence, read N- to C-terminus: Elongation factor P--(R)-beta-lysine ligase (324 aa).

Residue 75–77 coordinates substrate; it reads SPE. Residues 99 to 101 and N108 contribute to the ATP site; that span reads RNQ. Y117 lines the substrate pocket. 243–244 contacts ATP; sequence EL. Substrate is bound at residue E250. Residue G299 coordinates ATP.

Belongs to the class-II aminoacyl-tRNA synthetase family. EpmA subfamily. As to quaternary structure, homodimer.

The enzyme catalyses D-beta-lysine + L-lysyl-[protein] + ATP = N(6)-((3R)-3,6-diaminohexanoyl)-L-lysyl-[protein] + AMP + diphosphate + H(+). Its function is as follows. With EpmB is involved in the beta-lysylation step of the post-translational modification of translation elongation factor P (EF-P). Catalyzes the ATP-dependent activation of (R)-beta-lysine produced by EpmB, forming a lysyl-adenylate, from which the beta-lysyl moiety is then transferred to the epsilon-amino group of a conserved specific lysine residue in EF-P. This chain is Elongation factor P--(R)-beta-lysine ligase, found in Buchnera aphidicola subsp. Schizaphis graminum (strain Sg).